A 591-amino-acid polypeptide reads, in one-letter code: MPSRAGPKMDGSGGRVRLKAHYSGDIFITSVDAATTFEELCEEVRDMCGLHQHHPLTLKWVDSEGDPRTVSSQMELGEAFRLAGQHRDDGLILHVFPSTPEQPGMPCPGEDKSIYRRGARRWRKLYRANGHLFQAKRFNRRAYCGQCSERIWGLARQGYRCINCKLLVHKRCHGLVPLTCRRHMDSVMPSQEPPVADKSDDADLPSQETDGIAFISTRKQDSGQEDAEDLKPVIDGVDGIKISQGLGLQDFDLIRVIGRGSYAKVLLVRLKKNGQVYAMKVVKKELVHDDEDIDWVQTEKHVFEQASGNPFLVGLHSCFQTTSRLFLVIEYVNGGDLMFHMQRQRKLPEEHARFYAAEICIALNFLHERGIIYRDLKLDNVLLDADGHIKLTDYGMCKEGLGPGDTTSTFCGTPNYIAPEILRGEEYGFSVDWWALGVLMFEMMAGRSPFDIITDNPDMNTEDYLFQVILEKPIRIPRFLSVKASHVLKGFLNKDPKERLGCRPQTGFSDIKSHAFFRSIDWDLLEKKQALPPFQPQITDDYGLDNSDTQFTSEPVQLTPDDEDVIKRIDQSEFEGFEYINPLLLSTEESV.

The 84-residue stretch at 15-98 (RVRLKAHYSG…DGLILHVFPS (84 aa)) folds into the PB1 domain. Residues 79 to 145 (AFRLAGQHRD…KRFNRRAYCG (67 aa)) are interaction with SQSTM1. Residues 130–180 (GHLFQAKRFNRRAYCGQCSERIWGLARQGYRCINCKLLVHKRCHGLVPLTC) form a Phorbol-ester/DAG-type zinc finger. A Protein kinase domain is found at 251–517 (FDLIRVIGRG…FSDIKSHAFF (267 aa)). ATP contacts are provided by residues 257–265 (IGRGSYAKV) and Lys280. Asp375 acts as the Proton acceptor in catalysis. Phosphothreonine; by PDPK1 and PI3K is present on Thr409. In terms of domain architecture, AGC-kinase C-terminal spans 518–589 (RSIDWDLLEK…INPLLLSTEE (72 aa)). Thr559 carries the phosphothreonine modification. Ser590 is modified (phosphoserine).

This sequence belongs to the protein kinase superfamily. AGC Ser/Thr protein kinase family. PKC subfamily. As to quaternary structure, interacts with PARD6A, PARD6B and PARD6G. Part of a complex with PARD3, PARD6A or PARD6B or PARD6G and CDC42 or RAC1. Interacts with ADAP1/CENTA1. Interacts directly with SQSTM1. Forms a ternary complex with SQSTM1 and KCNAB2. Forms another ternary complex with SQSTM1 and GABRR3. Forms a complex with SQSTM1 and MAP2K5. Interacts (via the protein kinase domain) with WWC1. Forms a tripartite complex with WWC1 and DDR1, but predominantly in the absence of collagen. Component of the Par polarity complex, composed of at least phosphorylated PRKCZ, PARD3 and TIAM1. Interacts with PDPK1 (via N-terminal region). Interacts with WDFY2 (via WD repeats 1-3). Interacts with VAMP2. Forms a complex with WDFY2 and VAMP2. Interacts with APPL1. Interacts with WWC1, WWC2 and WWC3. In terms of processing, CDH5 is required for its phosphorylation at Thr-409. Phosphorylated by protein kinase PDPK1; phosphorylation is inhibited by the apoptotic C-terminal cleavage product of PKN2. Phosphorylation at Thr-409 by PI3K activates the kinase.

The protein localises to the cytoplasm. The protein resides in the endosome. It is found in the cell junction. It localises to the membrane. It carries out the reaction L-seryl-[protein] + ATP = O-phospho-L-seryl-[protein] + ADP + H(+). It catalyses the reaction L-threonyl-[protein] + ATP = O-phospho-L-threonyl-[protein] + ADP + H(+). Its activity is regulated as follows. Atypical PKCs (PRKCI and PRKCZ) exhibit an elevated basal enzymatic activity (that may be due to the interaction with SMG1 or SQSTM1) and are not regulated by diacylglycerol, phosphatidylserine, phorbol esters or calcium ions. Two specific sites, Thr-409 (activation loop of the kinase domain) and Thr-559 (turn motif), need to be phosphorylated for its full activation. Phosphatidylinositol 3,4,5-trisphosphate might be a physiological activator. In terms of biological role, calcium- and diacylglycerol-independent serine/threonine-protein kinase that functions in phosphatidylinositol 3-kinase (PI3K) pathway and mitogen-activated protein (MAP) kinase cascade, and is involved in NF-kappa-B activation, mitogenic signaling, cell proliferation, cell polarity, inflammatory response and maintenance of long-term potentiation (LTP). Upon lipopolysaccharide (LPS) treatment in macrophages, or following mitogenic stimuli, functions downstream of PI3K to activate MAP2K1/MEK1-MAPK1/ERK2 signaling cascade independently of RAF1 activation. Required for insulin-dependent activation of AKT3, but may function as an adapter rather than a direct activator. Upon insulin treatment may act as a downstream effector of PI3K and contribute to the activation of translocation of the glucose transporter SLC2A4/GLUT4 and subsequent glucose transport in adipocytes. In EGF-induced cells, binds and activates MAP2K5/MEK5-MAPK7/ERK5 independently of its kinase activity and can activate JUN promoter through MEF2C. Through binding with SQSTM1/p62, functions in interleukin-1 signaling and activation of NF-kappa-B with the specific adapters RIPK1 and TRAF6. Participates in TNF-dependent transactivation of NF-kappa-B by phosphorylating and activating IKBKB kinase, which in turn leads to the degradation of NF-kappa-B inhibitors. In migrating astrocytes, forms a cytoplasmic complex with PARD6A and is recruited by CDC42 to function in the establishment of cell polarity along with the microtubule motor and dynein. In association with FEZ1, stimulates neuronal differentiation in PC12 cells. In the inflammatory response, is required for the T-helper 2 (Th2) differentiation process, including interleukin production, efficient activation of JAK1 and the subsequent phosphorylation and nuclear translocation of STAT6. May be involved in development of allergic airway inflammation (asthma), a process dependent on Th2 immune response. In the NF-kappa-B-mediated inflammatory response, can relieve SETD6-dependent repression of NF-kappa-B target genes by phosphorylating the RELA subunit at 'Ser-311'. Phosphorylates VAMP2 in vitro. Phosphorylates and activates LRRK1, which phosphorylates RAB proteins involved in intracellular trafficking. The sequence is that of Protein kinase C zeta type (PRKCZ) from Oryctolagus cuniculus (Rabbit).